The sequence spans 544 residues: Chaperonin GroEL 1 (544 aa).

Residues 29 to 32 (TLGP), 86 to 90 (DGTTT), G413, 476 to 478 (NAA), and D492 contribute to the ATP site. The interval 523-544 (EPVKAPAGGGDMDGMGGMGGMM) is disordered. The segment covering 529–544 (AGGGDMDGMGGMGGMM) has biased composition (gly residues).

The protein belongs to the chaperonin (HSP60) family. In terms of assembly, forms a cylinder of 14 subunits composed of two heptameric rings stacked back-to-back. Interacts with the co-chaperonin GroES.

It is found in the cytoplasm. The enzyme catalyses ATP + H2O + a folded polypeptide = ADP + phosphate + an unfolded polypeptide.. Functionally, together with its co-chaperonin GroES, plays an essential role in assisting protein folding. The GroEL-GroES system forms a nano-cage that allows encapsulation of the non-native substrate proteins and provides a physical environment optimized to promote and accelerate protein folding. The chain is Chaperonin GroEL 1 from Cutibacterium acnes (strain DSM 16379 / KPA171202) (Propionibacterium acnes).